The following is a 286-amino-acid chain: MPAQIIDGKTIAATVRQAVKQQVKERIDSGLRAPGLAVVLVGSDAASEVYVGNKRRACEDVGFRSFDYDLPITTTQKELEKLIEELNDDDAVDGILVQLPLPAGLDATPILERIRPDKDVDGFHPFNIGRLSQRIPALRPCTPKGIMTLLEHTHVDLHGLNAVVVGASNIVGRPMSLELLLAGATTTVCHRFTKDLSDHVKRADIVVVAVGKAEFIPGEWIKPGAIVIDVGMNRLPDGRLTGDVEFSVAAERAGWITPVPGGVGPMTVASLIENTLQACVDYHDVR.

NADP(+) is bound at residue 166 to 168; the sequence is GAS.

Belongs to the tetrahydrofolate dehydrogenase/cyclohydrolase family. In terms of assembly, homodimer.

The enzyme catalyses (6R)-5,10-methylene-5,6,7,8-tetrahydrofolate + NADP(+) = (6R)-5,10-methenyltetrahydrofolate + NADPH. The catalysed reaction is (6R)-5,10-methenyltetrahydrofolate + H2O = (6R)-10-formyltetrahydrofolate + H(+). It functions in the pathway one-carbon metabolism; tetrahydrofolate interconversion. Catalyzes the oxidation of 5,10-methylenetetrahydrofolate to 5,10-methenyltetrahydrofolate and then the hydrolysis of 5,10-methenyltetrahydrofolate to 10-formyltetrahydrofolate. This Idiomarina loihiensis (strain ATCC BAA-735 / DSM 15497 / L2-TR) protein is Bifunctional protein FolD.